The sequence spans 297 residues: N-acetylmuramic acid 6-phosphate etherase (297 aa).

In terms of domain architecture, SIS spans 56 to 219 (AIEAFNKGGR…STISMIGIGK (164 aa)). The Proton donor role is filled by Glu-84. Glu-115 is a catalytic residue.

Belongs to the GCKR-like family. MurNAc-6-P etherase subfamily. As to quaternary structure, homodimer.

It carries out the reaction N-acetyl-D-muramate 6-phosphate + H2O = N-acetyl-D-glucosamine 6-phosphate + (R)-lactate. Its pathway is amino-sugar metabolism; N-acetylmuramate degradation. Specifically catalyzes the cleavage of the D-lactyl ether substituent of MurNAc 6-phosphate, producing GlcNAc 6-phosphate and D-lactate. The sequence is that of N-acetylmuramic acid 6-phosphate etherase from Lactococcus lactis subsp. cremoris (strain SK11).